Here is a 340-residue protein sequence, read N- to C-terminus: tRNA N6-adenosine threonylcarbamoyltransferase (340 aa).

Fe cation-binding residues include histidine 113 and histidine 117. Substrate is bound by residues 135-139 (LVSGG), aspartate 169, glycine 182, aspartate 186, and asparagine 274. Aspartate 302 provides a ligand contact to Fe cation.

Belongs to the KAE1 / TsaD family. The cofactor is Fe(2+).

It is found in the cytoplasm. The catalysed reaction is L-threonylcarbamoyladenylate + adenosine(37) in tRNA = N(6)-L-threonylcarbamoyladenosine(37) in tRNA + AMP + H(+). Functionally, required for the formation of a threonylcarbamoyl group on adenosine at position 37 (t(6)A37) in tRNAs that read codons beginning with adenine. Is involved in the transfer of the threonylcarbamoyl moiety of threonylcarbamoyl-AMP (TC-AMP) to the N6 group of A37, together with TsaE and TsaB. TsaD likely plays a direct catalytic role in this reaction. The protein is tRNA N6-adenosine threonylcarbamoyltransferase of Mycobacterium sp. (strain KMS).